A 290-amino-acid chain; its full sequence is Acetyl-coenzyme A carboxylase carboxyl transferase subunit beta (290 aa).

One can recognise a CoA carboxyltransferase N-terminal domain in the interval 27 to 290 (LWIKCPSCEA…LTRQPADAVA (264 aa)). 4 residues coordinate Zn(2+): Cys-31, Cys-34, Cys-50, and Cys-53. The C4-type zinc-finger motif lies at 31 to 53 (CPSCEAVLYRNDVEANLHVCPKC).

This sequence belongs to the AccD/PCCB family. Acetyl-CoA carboxylase is a heterohexamer composed of biotin carboxyl carrier protein (AccB), biotin carboxylase (AccC) and two subunits each of ACCase subunit alpha (AccA) and ACCase subunit beta (AccD). The cofactor is Zn(2+).

It is found in the cytoplasm. It carries out the reaction N(6)-carboxybiotinyl-L-lysyl-[protein] + acetyl-CoA = N(6)-biotinyl-L-lysyl-[protein] + malonyl-CoA. It functions in the pathway lipid metabolism; malonyl-CoA biosynthesis; malonyl-CoA from acetyl-CoA: step 1/1. Component of the acetyl coenzyme A carboxylase (ACC) complex. Biotin carboxylase (BC) catalyzes the carboxylation of biotin on its carrier protein (BCCP) and then the CO(2) group is transferred by the transcarboxylase to acetyl-CoA to form malonyl-CoA. This Paraburkholderia phymatum (strain DSM 17167 / CIP 108236 / LMG 21445 / STM815) (Burkholderia phymatum) protein is Acetyl-coenzyme A carboxylase carboxyl transferase subunit beta.